The primary structure comprises 57 residues: uncharacterized protein (57 aa).

The disordered stretch occupies residues 26–57 (VVSTRKRLKQNTNTPPHYDTSEDEDEDNYYNY). A compositionally biased stretch (acidic residues) spans 46–57 (SEDEDEDNYYNY).

This is an uncharacterized protein from Autographa californica nuclear polyhedrosis virus (AcMNPV).